Consider the following 419-residue polypeptide: L-rhamnose isomerase (419 aa).

Mn(2+)-binding residues include H262, D294, and D296.

It belongs to the rhamnose isomerase family. As to quaternary structure, homotetramer. It depends on Mn(2+) as a cofactor.

Its subcellular location is the cytoplasm. It carries out the reaction L-rhamnopyranose = L-rhamnulose. The protein operates within carbohydrate degradation; L-rhamnose degradation; glycerone phosphate from L-rhamnose: step 1/3. Its function is as follows. Catalyzes the interconversion of L-rhamnose and L-rhamnulose. The protein is L-rhamnose isomerase of Escherichia coli O9:H4 (strain HS).